A 421-amino-acid chain; its full sequence is Histidine--tRNA ligase (421 aa).

This sequence belongs to the class-II aminoacyl-tRNA synthetase family.

The protein resides in the cytoplasm. It catalyses the reaction tRNA(His) + L-histidine + ATP = L-histidyl-tRNA(His) + AMP + diphosphate + H(+). The sequence is that of Histidine--tRNA ligase from Pyrobaculum islandicum (strain DSM 4184 / JCM 9189 / GEO3).